Here is a 1401-residue protein sequence, read N- to C-terminus: Lysine-specific demethylase 6A (1401 aa).

The interval 1–1095 is interaction with SUPT6H; that stretch reads MKSCGVSLAT…TNIDLSDDKK (1095 aa). TPR repeat units follow at residues 93–126, 130–163, 170–199, 205–238, 250–283, 284–317, 318–351, and 352–385; these read SDFF…QSDY, AAFL…DPSF, HLRL…DCNP, AEIQ…ENLS, GWMH…DPNS, GQSW…SEAS, ADTW…DHGH, and AAAW…KSCS. Positions 437–449 are enriched in polar residues; that stretch reads AMNTAQQNTSDNW. The segment at 437–457 is disordered; the sequence is AMNTAQQNTSDNWSGGHAVSH. Arg-519 carries the omega-N-methylarginine modification. The tract at residues 521 to 541 is disordered; it reads TGIPNGPTADSSLPTNSVSGQ. The residue at position 549 (Arg-549) is an Omega-N-methylarginine. Composition is skewed to polar residues over residues 624–652 and 660–724; these read LTSS…SHSA and LSST…SGNI. 5 disordered regions span residues 624 to 746, 758 to 778, 810 to 864, 914 to 940, and 1043 to 1079; these read LTSS…SVEG, AVCS…SDNP, KTDN…ESQS, LLDK…NPPT, and FQES…KGPF. Phosphoserine is present on Ser-769. Low complexity predominate over residues 814–833; sequence SVASSPSSAISTATPSPKST. Thr-827 carries the phosphothreonine modification. The residue at position 829 (Ser-829) is a Phosphoserine. The segment covering 834-848 has biased composition (polar residues); it reads EQTTTNSVTSLNSPH. The span at 918 to 931 shows a compositional bias: pro residues; that stretch reads CPPPRPPSSPYPPL. Residues 1046-1063 are compositionally biased toward basic and acidic residues; that stretch reads SLREENEKRSHHKDHSDS. Positions 1095 to 1258 constitute a JmjC domain; that stretch reads KWKLQLHELT…YKLAVERYEW (164 aa). Fe cation is bound by residues His-1146, Glu-1148, and His-1226. Zn(2+) is bound by residues Cys-1331, Cys-1334, Cys-1358, and Cys-1361.

This sequence belongs to the UTX family. In terms of assembly, interacts with TLE1. Component of the MLL2/3 complex (also named ASCOM complex), at least composed of KMT2D/MLL2 or KMT2C/MLL3, ASH2L, RBBP5, WDR5, NCOA6, DPY30, KDM6A (or KDM6B), PAXIP1/PTIP, PAGR1 and alpha- and beta-tubulin. Interacts with SUPT6H. Interacts with SMARCA4. Interacts with PROSER1. Requires L-ascorbate as cofactor. It depends on Fe(2+) as a cofactor.

The protein localises to the nucleus. It carries out the reaction N(6),N(6),N(6)-trimethyl-L-lysyl(27)-[histone H3] + 2 2-oxoglutarate + 2 O2 = N(6)-methyl-L-lysyl(27)-[histone H3] + 2 formaldehyde + 2 succinate + 2 CO2. Its function is as follows. Histone demethylase that specifically demethylates 'Lys-27' of histone H3, thereby playing a central role in histone code. Demethylates trimethylated and dimethylated but not monomethylated H3 'Lys-27'. Plays a central role in regulation of posterior development, by regulating HOX gene expression. Demethylation of 'Lys-27' of histone H3 is concomitant with methylation of 'Lys-4' of histone H3, and regulates the recruitment of the PRC1 complex and monoubiquitination of histone H2A. Plays a demethylase-independent role in chromatin remodeling to regulate T-box family member-dependent gene expression. The chain is Lysine-specific demethylase 6A (KDM6A) from Homo sapiens (Human).